The following is a 113-amino-acid chain: Fruiting body-specific class I hydrophobin fbh1 (113 aa).

The N-terminal stretch at 1 to 23 (MFSIRIATVVLAASAALRPPARI) is a signal peptide. 4 cysteine pairs are disulfide-bonded: cysteine 33–cysteine 92, cysteine 40–cysteine 86, cysteine 41–cysteine 73, and cysteine 93–cysteine 106.

Belongs to the fungal hydrophobin family. Self-assembles to form functional amyloid fibrils called rodlets. Self-assembly into fibrillar rodlets occurs spontaneously at hydrophobic:hydrophilic interfaces and the rodlets further associate laterally to form amphipathic monolayers.

The protein localises to the secreted. The protein resides in the cell wall. Aerial growth, conidiation, and dispersal of filamentous fungi in the environment rely upon a capability of their secreting small amphipathic proteins called hydrophobins (HPBs) with low sequence identity. Class I can self-assemble into an outermost layer of rodlet bundles on aerial cell surfaces, conferring cellular hydrophobicity that supports fungal growth, development and dispersal; whereas Class II form highly ordered films at water-air interfaces through intermolecular interactions but contribute nothing to the rodlet structure. Fbh1 is a fruiting body-specific class I hydrophobin that is involved in the growth rate and primordia formation. This chain is Fruiting body-specific class I hydrophobin fbh1, found in Pleurotus ostreatus (Oyster mushroom).